A 677-amino-acid chain; its full sequence is Beta-galactosidase BgaA (677 aa).

Substrate is bound at residue Arg112. Residue Cys116 participates in Zn(2+) binding. Asn150 serves as a coordination point for substrate. The active-site Proton donor is the Glu151. Zn(2+) contacts are provided by Cys156, Cys158, and Cys161. Glu309 (nucleophile) is an active-site residue. Residues Trp317 and 357–360 (EKYH) each bind substrate.

Belongs to the glycosyl hydrolase 42 family. Dimer.

The enzyme catalyses Hydrolysis of terminal non-reducing beta-D-galactose residues in beta-D-galactosides.. With respect to regulation, no activity is lost during treatment with 20 or 100 mM EDTA in Z buffer for 3 hours at 0 degrees Celsius, nor is activity greatly stimulated by the addition of cations. Inhibited by 1 mM zinc and 1 mM copper, the levels of activity decrease to 10% of the untreated control. Nickel, cobalt and manganese at concentrations of 10 mM decrease enzyme activity to either 40% (for nickel and cobalt) or 60% (for manganese) of the activity in untreated controls. No change in enzyme activity in the presence of calcium and magnesium at concentrations up to 50 mM. EDTA-treated enzyme exhibits a slight increase in relative specific activity when it is assayed in the presence of 50 mM NaCl or 50 mM KCl, it does not exhibit enhanced activity at concentrations greater than 250 mM. Maintains between 20 and 40% of activity in the presence of 4 M NaCl or 4 M KCl, and it is more active in the presence of KCl than in the presence of NaCl. Retains 50% of activity in the presence of 3 M KCl or 2.5 M NaCl. Functionally, hydrolyzes o-nitrophenyl-beta-D-galactopyranoside (ONPG), p-nitrophenyl-beta-D-galactopyranoside (PNPG), 5-bromo-4-chloro-3-indoyl-beta-D-galactosde (X-gal), o-nitrophenyl-beta-D-fucopyranoside (ONPF) and p-nitrophenyl-beta-D-fucopyranoside (PNPF) with greatest activity towards ONPG and PNPG and low levels of activity with ONPF and PNPF. Detectable, but very low levels of activity towards p-nitrophenyl-beta-lactose (PNPL), p-nitrophenyl-beta-cellobiose (PNPC), p-nitrophenyl-alpha-galactopyranoside (PNP-alpha-G), and p-nitrophenyl-beta-xylopyranoside (PNPX). This chain is Beta-galactosidase BgaA, found in Planococcus sp. (strain 'SOS Orange').